We begin with the raw amino-acid sequence, 1064 residues long: Phosphatidylinositol 4,5-bisphosphate 3-kinase catalytic subunit beta isoform (1064 aa).

The region spanning 20 to 109 is the PI3K-ABD domain; it reads SDGAISVDFL…LPVLKLVTRS (90 aa). In terms of domain architecture, PI3K-RBD spans 188-279; sequence GGKLVVAVHF…RTLPHFILVE (92 aa). Residue S318 is modified to Phosphoserine. The region spanning 323–490 is the C2 PI3K-type domain; the sequence is NNNPFQITLV…NATALHITFP (168 aa). The Nuclear localization signal (NLS) signature appears at 404 to 412; the sequence is KVKTKKSTK. In terms of domain architecture, PIK helical spans 518-695; sequence ANVSSRGGKK…GVILEAYCRG (178 aa). Residues 766–1047 form the PI3K/PI4K catalytic domain; the sequence is YVEKCKYMDS…KFDEALRESW (282 aa). The interval 772–778 is G-loop; the sequence is YMDSKMK. Residues 910–918 form a catalytic loop region; that stretch reads GIGDRHSDN. The tract at residues 929 to 955 is activation loop; that stretch reads HIDFGHILGNFKSKFGIKRERVPFILT. S1064 is modified (phosphoserine; by autocatalysis).

The protein belongs to the PI3/PI4-kinase family. As to quaternary structure, heterodimer of a catalytic subunit PIK3CB and a p85 regulatory subunit (PIK3R1, PIK3R2 or PIK3R3). Interaction with PIK3R2 is required for nuclear localization and nuclear export. Part of a complex with PIK3R1 and PTEN. Binding to PTEN may antagonize the lipid kinase activity under normal growth conditions. Part of a complex involved in autophagosome formation composed of PIK3C3 and PIK3R4. Interacts with BECN1, ATG14 and RAB5A. In terms of processing, phosphorylation at Ser-1064 down-regulates lipid kinase activity. Post-translationally, autophosphorylation at Ser-1064 negatively regulates the phosphatidylinositol-4,5-bisphosphate 3-kinase activity.

It localises to the cytoplasm. The protein resides in the nucleus. It carries out the reaction a 1,2-diacyl-sn-glycero-3-phospho-(1D-myo-inositol-4,5-bisphosphate) + ATP = a 1,2-diacyl-sn-glycero-3-phospho-(1D-myo-inositol-3,4,5-trisphosphate) + ADP + H(+). The enzyme catalyses 1-octadecanoyl-2-(5Z,8Z,11Z,14Z)-eicosatetraenoyl-sn-glycero-3-phospho-1D-myo-inositol 4,5-bisphosphate + ATP = 1-octadecanoyl-2-(5Z,8Z,11Z,14Z-eicosatetraenoyl)-sn-glycero-3-phospho-(1D-myo-inositol 3,4,5-triphosphate) + ADP + H(+). The catalysed reaction is L-seryl-[protein] + ATP = O-phospho-L-seryl-[protein] + ADP + H(+). Its pathway is phospholipid metabolism; phosphatidylinositol phosphate biosynthesis. Functionally, phosphoinositide-3-kinase (PI3K) phosphorylates phosphatidylinositol (PI) derivatives at position 3 of the inositol ring to produce 3-phosphoinositides. Uses ATP and PtdIns(4,5)P2 (phosphatidylinositol 4,5-bisphosphate) to generate phosphatidylinositol 3,4,5-trisphosphate (PIP3). PIP3 plays a key role by recruiting PH domain-containing proteins to the membrane, including AKT1 and PDPK1, activating signaling cascades involved in cell growth, survival, proliferation, motility and morphology. Involved in the activation of AKT1 upon stimulation by G-protein coupled receptors (GPCRs) ligands such as CXCL12, sphingosine 1-phosphate, and lysophosphatidic acid. May also act downstream receptor tyrosine kinases. Required in different signaling pathways for stable platelet adhesion and aggregation. Plays a role in platelet activation signaling triggered by GPCRs, alpha-IIb/beta-3 integrins (ITGA2B/ ITGB3) and ITAM (immunoreceptor tyrosine-based activation motif)-bearing receptors such as GP6. Regulates the strength of adhesion of ITGA2B/ ITGB3 activated receptors necessary for the cellular transmission of contractile forces. Required for platelet aggregation induced by F2 (thrombin) and thromboxane A2 (TXA2). Has a role in cell survival. May have a role in cell migration. Involved in the early stage of autophagosome formation. Modulates the intracellular level of PtdIns3P (phosphatidylinositol 3-phosphate) and activates PIK3C3 kinase activity. May act as a scaffold, independently of its lipid kinase activity to positively regulate autophagy. May have a role in insulin signaling as scaffolding protein in which the lipid kinase activity is not required. May have a kinase-independent function in regulating cell proliferation and in clathrin-mediated endocytosis. Mediator of oncogenic signal in cell lines lacking PTEN. The lipid kinase activity is necessary for its role in oncogenic transformation. Required for the growth of ERBB2 and RAS driven tumors. Also has a protein kinase activity showing autophosphorylation. This Mus musculus (Mouse) protein is Phosphatidylinositol 4,5-bisphosphate 3-kinase catalytic subunit beta isoform (Pik3cb).